The following is a 399-amino-acid chain: Ribonuclease T2-like 1-A (399 aa).

An N-terminal signal peptide occupies residues 1–17 (MLSILSIAALLIATVQA). Cystine bridges form between Cys-24/Cys-43, Cys-32/Cys-79, Cys-42/Cys-150, Cys-87/Cys-142, and Cys-214/Cys-249. Residues His-72, Glu-135, and His-139 contribute to the active site. The disordered stretch occupies residues 259–279 (KGNSGANTLTTKTTGTTTSGS). Over residues 262–279 (SGANTLTTKTTGTTTSGS) the composition is skewed to low complexity. A glycan (N-linked (GlcNAc...) asparagine) is linked at Asn-291.

The protein belongs to the RNase T2 family.

Its subcellular location is the vacuole lumen. It is found in the cytoplasm. The enzyme catalyses a ribonucleotidyl-ribonucleotide-RNA + H2O = a 3'-end 3'-phospho-ribonucleotide-RNA + a 5'-end dephospho-ribonucleoside-RNA + H(+). Rnase which modulates cell survival under stress conditions. Released from the vacuole to the cytoplasm during stress to promote tRNA and rRNA cleavage and to activate separately a downstream pathway that promotes cell death. Involved in cell size, vacuolar morphology and growth at high temperatures and high salt concentration. The sequence is that of Ribonuclease T2-like 1-A (RNY1-A) from Candida albicans (strain SC5314 / ATCC MYA-2876) (Yeast).